The primary structure comprises 488 residues: DELTA-alicitoxin-Pse2b (488 aa).

A signal peptide spans 1 to 21; that stretch reads MSKPIIFLLTAFVVLTDLGAT. Residues 24–344 form the MACPF domain; it reads TEKVEVKAKP…GYLNFDCAYE (321 aa). In terms of domain architecture, EGF-like spans 369–398; the sequence is VCKLGPEGCHSDDDCESDDLIYCACCGDSC. 3 disulfides stabilise this stretch: cysteine 370–cysteine 383, cysteine 377–cysteine 391, and cysteine 393–cysteine 398.

It is found in the secreted. The protein localises to the nematocyst. Its function is as follows. Causes lethal toxicity to the shrimp Palaemon paucidence, and hemolytic activity toward sheep red blood cells. In Phyllodiscus semoni (Night anemone), this protein is DELTA-alicitoxin-Pse2b.